Consider the following 544-residue polypeptide: CTP synthase (544 aa).

The segment at 1–265 is amidoligase domain; that stretch reads MTKFIFVTGG…DNIITEQLQL (265 aa). CTP is bound at residue Ser-13. Ser-13 is a binding site for UTP. ATP contacts are provided by residues 14-19 and Asp-71; that span reads SLGKGI. Residues Asp-71 and Glu-139 each contribute to the Mg(2+) site. CTP contacts are provided by residues 146–148, 186–191, and Lys-222; these read DIE and KTKPTQ. UTP is bound by residues 186–191 and Lys-222; that span reads KTKPTQ. One can recognise a Glutamine amidotransferase type-1 domain in the interval 290 to 544; it reads KIAMVGKYVD…VKAALNNKKA (255 aa). Gly-353 contacts L-glutamine. The active-site Nucleophile; for glutamine hydrolysis is the Cys-380. Residues 381 to 384, Glu-404, and Arg-471 contribute to the L-glutamine site; that span reads LGMQ. Residues His-517 and Glu-519 contribute to the active site.

The protein belongs to the CTP synthase family. Homotetramer.

The enzyme catalyses UTP + L-glutamine + ATP + H2O = CTP + L-glutamate + ADP + phosphate + 2 H(+). It catalyses the reaction L-glutamine + H2O = L-glutamate + NH4(+). It carries out the reaction UTP + NH4(+) + ATP = CTP + ADP + phosphate + 2 H(+). It participates in pyrimidine metabolism; CTP biosynthesis via de novo pathway; CTP from UDP: step 2/2. Allosterically activated by GTP, when glutamine is the substrate; GTP has no effect on the reaction when ammonia is the substrate. The allosteric effector GTP functions by stabilizing the protein conformation that binds the tetrahedral intermediate(s) formed during glutamine hydrolysis. Inhibited by the product CTP, via allosteric rather than competitive inhibition. Functionally, catalyzes the ATP-dependent amination of UTP to CTP with either L-glutamine or ammonia as the source of nitrogen. Regulates intracellular CTP levels through interactions with the four ribonucleotide triphosphates. This is CTP synthase from Neisseria gonorrhoeae (strain ATCC 700825 / FA 1090).